Consider the following 184-residue polypeptide: Peptide deformylase (184 aa).

Positions 111 and 154 each coordinate Fe cation. Glu-155 is an active-site residue. His-158 provides a ligand contact to Fe cation.

Belongs to the polypeptide deformylase family. Fe(2+) is required as a cofactor.

It catalyses the reaction N-terminal N-formyl-L-methionyl-[peptide] + H2O = N-terminal L-methionyl-[peptide] + formate. Removes the formyl group from the N-terminal Met of newly synthesized proteins. Requires at least a dipeptide for an efficient rate of reaction. N-terminal L-methionine is a prerequisite for activity but the enzyme has broad specificity at other positions. The protein is Peptide deformylase of Pediococcus pentosaceus (strain ATCC 25745 / CCUG 21536 / LMG 10740 / 183-1w).